Reading from the N-terminus, the 513-residue chain is Tigger transposable element-derived protein 4 (513 aa).

An HTH psq-type domain is found at 12–63 (PVTVKKKKSLSIEEKIDIINAVESGKKKAEIAAEYGIKKNSLSSIMKNKDKV). 2 DNA-binding regions (H-T-H motif) span residues 39–59 (KAEIAAEYGIKKNSLSSIMKN) and 108–139 (PMLRLKANDFAQKLGHNDFKCSNGWLDRFKSR). In terms of domain architecture, HTH CENPB-type spans 75-146 (KRKRLRTAFY…KSRYGLVFRA (72 aa)). The DDE-1 domain maps to 174–375 (YHPKNVFNVK…VTPETIVKSY (202 aa)). Basic and acidic residues predominate over residues 433–448 (TQKDDAEWAGESKQDE). Residues 433–473 (TQKDDAEWAGESKQDETGLYTSDEEEEDSGALEVDLPSPSK) are disordered.

Belongs to the tigger transposable element derived protein family.

It is found in the nucleus. The protein is Tigger transposable element-derived protein 4 (Tigd4) of Mus musculus (Mouse).